The following is a 429-amino-acid chain: 3-phosphoshikimate 1-carboxyvinyltransferase (429 aa).

Positions 22, 23, and 27 each coordinate 3-phosphoshikimate. Residue Lys22 coordinates phosphoenolpyruvate. 2 residues coordinate phosphoenolpyruvate: Gly94 and Arg122. The 3-phosphoshikimate site is built by Ser167, Gln169, Asp315, and Lys342. Gln169 contributes to the phosphoenolpyruvate binding site. Asp315 serves as the catalytic Proton acceptor. Positions 346 and 388 each coordinate phosphoenolpyruvate.

This sequence belongs to the EPSP synthase family. Monomer.

It localises to the cytoplasm. The catalysed reaction is 3-phosphoshikimate + phosphoenolpyruvate = 5-O-(1-carboxyvinyl)-3-phosphoshikimate + phosphate. Its pathway is metabolic intermediate biosynthesis; chorismate biosynthesis; chorismate from D-erythrose 4-phosphate and phosphoenolpyruvate: step 6/7. Functionally, catalyzes the transfer of the enolpyruvyl moiety of phosphoenolpyruvate (PEP) to the 5-hydroxyl of shikimate-3-phosphate (S3P) to produce enolpyruvyl shikimate-3-phosphate and inorganic phosphate. This Geobacter sp. (strain M21) protein is 3-phosphoshikimate 1-carboxyvinyltransferase.